Here is a 158-residue protein sequence, read N- to C-terminus: Transcription elongation factor GreA (158 aa).

Residues 49-69 (SEYESAKDEQAFVEGRISQIE) are a coiled coil. The segment at 102 to 125 (EEPESYTIVGESESDPLSGKISNE) is disordered.

Belongs to the GreA/GreB family.

Functionally, necessary for efficient RNA polymerase transcription elongation past template-encoded arresting sites. The arresting sites in DNA have the property of trapping a certain fraction of elongating RNA polymerases that pass through, resulting in locked ternary complexes. Cleavage of the nascent transcript by cleavage factors such as GreA or GreB allows the resumption of elongation from the new 3'terminus. GreA releases sequences of 2 to 3 nucleotides. The sequence is that of Transcription elongation factor GreA from Limosilactobacillus fermentum (strain NBRC 3956 / LMG 18251) (Lactobacillus fermentum).